We begin with the raw amino-acid sequence, 179 residues long: MGLEEKAGDLGIVTTTLEGVVNWGRTKAMWPMLFGLACCAIEMMAGQASNYDMSRFGLELMRASPRQADLMIVAGRVSRKMAPVLRRLYDQMPEPKWVVAMGDCASCGGVYNNYAIVQGVDEIVPVDVYVAGCPPRPEALIDGILQLHEKIKRDKITDHADGKPIRIEQAERGALKPLG.

Cys38, Cys39, Cys104, and Cys133 together coordinate [4Fe-4S] cluster.

This sequence belongs to the complex I 20 kDa subunit family. NDH-1 is composed of 14 different subunits. Subunits NuoB, C, D, E, F, and G constitute the peripheral sector of the complex. [4Fe-4S] cluster is required as a cofactor.

It is found in the cell membrane. The catalysed reaction is a quinone + NADH + 5 H(+)(in) = a quinol + NAD(+) + 4 H(+)(out). In terms of biological role, NDH-1 shuttles electrons from NADH, via FMN and iron-sulfur (Fe-S) centers, to quinones in the respiratory chain. The immediate electron acceptor for the enzyme in this species is believed to be ubiquinone. Couples the redox reaction to proton translocation (for every two electrons transferred, four hydrogen ions are translocated across the cytoplasmic membrane), and thus conserves the redox energy in a proton gradient. This chain is NADH-quinone oxidoreductase subunit B 1, found in Herpetosiphon aurantiacus (strain ATCC 23779 / DSM 785 / 114-95).